The primary structure comprises 200 residues: Late protein I196L (200 aa).

2 consecutive repeat copies span residues 28–48 (SNSLTTAISNNTSTTILPTTS) and 49–69 (SNSLMTAIPNNTSTTISPTTS). A 3; approximate repeat occupies 70–91 (SNYLTSAISTNISDKEEDTPFS).

This sequence belongs to the asfivirus I196L family.

This African swine fever virus (isolate Tick/South Africa/Pretoriuskop Pr4/1996) (ASFV) protein is Late protein I196L.